Consider the following 699-residue polypeptide: Glycine--tRNA ligase beta subunit (699 aa).

This sequence belongs to the class-II aminoacyl-tRNA synthetase family. As to quaternary structure, tetramer of two alpha and two beta subunits.

It localises to the cytoplasm. The catalysed reaction is tRNA(Gly) + glycine + ATP = glycyl-tRNA(Gly) + AMP + diphosphate. This is Glycine--tRNA ligase beta subunit from Bradyrhizobium diazoefficiens (strain JCM 10833 / BCRC 13528 / IAM 13628 / NBRC 14792 / USDA 110).